Consider the following 179-residue polypeptide: ATP-dependent protease subunit HslV (179 aa).

Threonine 7 is a catalytic residue. Glycine 162, cysteine 165, and threonine 168 together coordinate Na(+).

Belongs to the peptidase T1B family. HslV subfamily. As to quaternary structure, a double ring-shaped homohexamer of HslV is capped on each side by a ring-shaped HslU homohexamer. The assembly of the HslU/HslV complex is dependent on binding of ATP.

The protein localises to the cytoplasm. The enzyme catalyses ATP-dependent cleavage of peptide bonds with broad specificity.. With respect to regulation, allosterically activated by HslU binding. Its function is as follows. Protease subunit of a proteasome-like degradation complex believed to be a general protein degrading machinery. This chain is ATP-dependent protease subunit HslV, found in Aromatoleum aromaticum (strain DSM 19018 / LMG 30748 / EbN1) (Azoarcus sp. (strain EbN1)).